Consider the following 283-residue polypeptide: Orotidine 5'-phosphate decarboxylase (283 aa).

The Proton donor role is filled by Lys97.

It belongs to the OMP decarboxylase family. Type 2 subfamily.

The enzyme catalyses orotidine 5'-phosphate + H(+) = UMP + CO2. It functions in the pathway pyrimidine metabolism; UMP biosynthesis via de novo pathway; UMP from orotate: step 2/2. The chain is Orotidine 5'-phosphate decarboxylase from Clostridium botulinum (strain Okra / Type B1).